The primary structure comprises 296 residues: Nucleotide-binding protein ABC3036 (296 aa).

13-20 (GMSGAGKS) contributes to the ATP binding site. 64–67 (DLRG) is a GTP binding site.

It belongs to the RapZ-like family.

Functionally, displays ATPase and GTPase activities. This chain is Nucleotide-binding protein ABC3036, found in Shouchella clausii (strain KSM-K16) (Alkalihalobacillus clausii).